Reading from the N-terminus, the 252-residue chain is Adapter protein MecA (252 aa).

It belongs to the MecA family. Homodimer.

Its function is as follows. Enables the recognition and targeting of unfolded and aggregated proteins to the ClpC protease or to other proteins involved in proteolysis. This chain is Adapter protein MecA, found in Streptococcus uberis (strain ATCC BAA-854 / 0140J).